The primary structure comprises 270 residues: Phospholipase A and acyltransferase 5 (270 aa).

Disordered stretches follow at residues 1–54 (MGLS…SASS) and 70–122 (RRLE…NPRP). 2 stretches are compositionally biased toward polar residues: residues 24–54 (TQIS…SASS) and 100–116 (IPTS…NQAV). The LRAT domain maps to 127-240 (LIEIFRIGYE…LRYGVPRSQQ (114 aa)). Residues His-137 and His-149 contribute to the active site. Cys-224 serves as the catalytic Acyl-thioester intermediate.

Belongs to the H-rev107 family. As to expression, isoform 4 shows highest expression level in testis.

The protein localises to the cytoplasm. It is found in the cytosol. The enzyme catalyses a 1,2-diacyl-sn-glycero-3-phosphocholine + H2O = a 1-acyl-sn-glycero-3-phosphocholine + a fatty acid + H(+). It catalyses the reaction a 1,2-diacyl-sn-glycero-3-phosphocholine + H2O = a 2-acyl-sn-glycero-3-phosphocholine + a fatty acid + H(+). The catalysed reaction is 1-hexadecanoyl-2-(5Z,8Z,11Z,14Z-eicosatetraenoyl)-sn-glycero-3-phosphocholine + 1,2-di-(9Z-octadecenoyl)-sn-glycero-3-phosphoethanolamine = N-(5Z,8Z,11Z,14Z-eicosatetraenoyl)-1,2-di-(9Z-octadecenoyl)-sn-glycero-3-phosphoethanolamine + 1-hexadecanoyl-sn-glycero-3-phosphocholine + H(+). It carries out the reaction 1,2-di-(9Z-octadecenoyl)-sn-glycero-3-phosphoethanolamine + 1,2-dihexadecanoyl-sn-glycero-3-phosphocholine = N-hexadecanoyl-1,2-di-(9Z-octadecenoyl)-sn-glycero-3-phosphoethanolamine + 1-hexadecanoyl-sn-glycero-3-phosphocholine + H(+). The enzyme catalyses 1,2-di-(9Z-octadecenoyl)-sn-glycero-3-phosphoethanolamine + 1,2-dihexadecanoyl-sn-glycero-3-phosphocholine = N-hexadecanoyl-1,2-di-(9Z-octadecenoyl)-sn-glycero-3-phosphoethanolamine + 2-hexadecanoyl-sn-glycero-3-phosphocholine + H(+). It catalyses the reaction a 1,2-diacyl-sn-glycero-3-phosphoethanolamine + a 1,2-diacyl-sn-glycero-3-phosphocholine = an N-acyl-1,2-diacyl-sn-glycero-3-phosphoethanolamine + a 1-acyl-sn-glycero-3-phosphocholine + H(+). The catalysed reaction is a 1,2-diacyl-sn-glycero-3-phosphoethanolamine + a 1,2-diacyl-sn-glycero-3-phosphocholine = an N-acyl-1,2-diacyl-sn-glycero-3-phosphoethanolamine + a 2-acyl-sn-glycero-3-phosphocholine + H(+). It carries out the reaction 1-hexadecanoyl-2-(9Z-octadecenoyl)-sn-glycero-3-phosphocholine + 1,2-di-(9Z-octadecenoyl)-sn-glycero-3-phosphoethanolamine = N,1,2-tri-(9Z-octadecenoyl)-sn-glycero-3-phosphoethanolamine + 1-hexadecanoyl-sn-glycero-3-phosphocholine + H(+). Its function is as follows. Exhibits both phospholipase A1/2 and acyltransferase activities. Shows phospholipase A1 (PLA1) and A2 (PLA2) activity, catalyzing the calcium-independent release of fatty acids from the sn-1 or sn-2 position of glycerophospholipids. Shows N-acyltransferase activity, catalyzing the calcium-independent transfer of a fatty acyl group at the sn-1 position of phosphatidylcholine (PC) and other glycerophospholipids to the primary amine of phosphatidylethanolamine (PE), forming N-acylphosphatidylethanolamine (NAPE), which serves as precursor for N-acylethanolamines (NAEs). This is Phospholipase A and acyltransferase 5 from Mus musculus (Mouse).